A 191-amino-acid polypeptide reads, in one-letter code: UPF0228 protein MM_1428 (191 aa).

The protein belongs to the UPF0228 family.

The chain is UPF0228 protein MM_1428 from Methanosarcina mazei (strain ATCC BAA-159 / DSM 3647 / Goe1 / Go1 / JCM 11833 / OCM 88) (Methanosarcina frisia).